The sequence spans 90 residues: Small ribosomal subunit protein bS16 (90 aa).

Belongs to the bacterial ribosomal protein bS16 family.

The sequence is that of Small ribosomal subunit protein bS16 from Lactococcus lactis subsp. cremoris (strain SK11).